The chain runs to 459 residues: Pup--protein ligase (459 aa).

Residue glutamate 9 participates in Mg(2+) binding. Arginine 54 is an ATP binding site. Residue tyrosine 56 coordinates Mg(2+). The active-site Proton acceptor is aspartate 58. Position 64 (glutamate 64) interacts with Mg(2+). Positions 67 and 421 each coordinate ATP.

The protein belongs to the Pup ligase/Pup deamidase family. Pup-conjugating enzyme subfamily.

The catalysed reaction is ATP + [prokaryotic ubiquitin-like protein]-L-glutamate + [protein]-L-lysine = ADP + phosphate + N(6)-([prokaryotic ubiquitin-like protein]-gamma-L-glutamyl)-[protein]-L-lysine.. The protein operates within protein degradation; proteasomal Pup-dependent pathway. It functions in the pathway protein modification; protein pupylation. Its function is as follows. Catalyzes the covalent attachment of the prokaryotic ubiquitin-like protein modifier Pup to the proteasomal substrate proteins, thereby targeting them for proteasomal degradation. This tagging system is termed pupylation. The ligation reaction involves the side-chain carboxylate of the C-terminal glutamate of Pup and the side-chain amino group of a substrate lysine. The sequence is that of Pup--protein ligase from Jonesia denitrificans (strain ATCC 14870 / DSM 20603 / BCRC 15368 / CIP 55.134 / JCM 11481 / NBRC 15587 / NCTC 10816 / Prevot 55134) (Listeria denitrificans).